We begin with the raw amino-acid sequence, 557 residues long: Formate--tetrahydrofolate ligase (557 aa).

65–72 (TPAGEGKT) contributes to the ATP binding site.

It belongs to the formate--tetrahydrofolate ligase family.

It catalyses the reaction (6S)-5,6,7,8-tetrahydrofolate + formate + ATP = (6R)-10-formyltetrahydrofolate + ADP + phosphate. It participates in one-carbon metabolism; tetrahydrofolate interconversion. The sequence is that of Formate--tetrahydrofolate ligase from Methylobacterium radiotolerans (strain ATCC 27329 / DSM 1819 / JCM 2831 / NBRC 15690 / NCIMB 10815 / 0-1).